The following is a 357-amino-acid chain: Probable GTP 3',8-cyclase (357 aa).

The region spanning 5–234 is the Radical SAM core domain; it reads DFGRDVSGVR…DRRRYWVSSR (230 aa). Arginine 14 serves as a coordination point for GTP. [4Fe-4S] cluster contacts are provided by cysteine 21 and cysteine 25. Residue tyrosine 27 participates in S-adenosyl-L-methionine binding. Cysteine 28 is a [4Fe-4S] cluster binding site. A GTP-binding site is contributed by lysine 68. Glycine 72 lines the S-adenosyl-L-methionine pocket. Threonine 96 serves as a coordination point for GTP. Serine 120 is a binding site for S-adenosyl-L-methionine. Lysine 157 contacts GTP. Positions 232–256 are disordered; that stretch reads SSRDAGSTADDAAQSVTPDGGAHPD. Cysteine 272 and cysteine 275 together coordinate [4Fe-4S] cluster. Residue 277–279 coordinates GTP; sequence RVR. Cysteine 289 contacts [4Fe-4S] cluster.

This sequence belongs to the radical SAM superfamily. MoaA family. [4Fe-4S] cluster is required as a cofactor.

It catalyses the reaction GTP + AH2 + S-adenosyl-L-methionine = (8S)-3',8-cyclo-7,8-dihydroguanosine 5'-triphosphate + 5'-deoxyadenosine + L-methionine + A + H(+). The protein operates within cofactor biosynthesis; molybdopterin biosynthesis. Functionally, catalyzes the cyclization of GTP to (8S)-3',8-cyclo-7,8-dihydroguanosine 5'-triphosphate. This is Probable GTP 3',8-cyclase from Halobacterium salinarum (strain ATCC 29341 / DSM 671 / R1).